A 345-amino-acid polypeptide reads, in one-letter code: MPNRAVLLVNLGSPDSTSVPDVRRYLDEFLGDERVIDRPAQPFRSILVHRIIVPRRSPNSAHAYEQIWTKDGSPLIITSRNVQQKLAATLGPETPVYLAMRYGQPSIASVLGQIVADGVSELLLIPQYPHYAMSSWETVVVKVYEEAARQAPQLRVTTVQPFFDDADYIEALHAVSAPYFAQPHDYVLFSYHGIPVRHLCKADSSHAHCQIVNDCCNTPSPVHATCYRAQVFATTRALAARAGLAPDRHSVSFQSRLVGEPWLSPYTDHELERLAKAGIKRILVLCPAFLSDCLETLEEISVAGKETFVQAGGESFTQIPCLNDQPPFIDFLANRVRTWLQASHR.

Fe cation is bound by residues histidine 192 and glutamate 295.

Belongs to the ferrochelatase family.

Its subcellular location is the cytoplasm. The catalysed reaction is heme b + 2 H(+) = protoporphyrin IX + Fe(2+). It functions in the pathway porphyrin-containing compound metabolism; protoheme biosynthesis; protoheme from protoporphyrin-IX: step 1/1. Its function is as follows. Catalyzes the ferrous insertion into protoporphyrin IX. This chain is Ferrochelatase, found in Opitutus terrae (strain DSM 11246 / JCM 15787 / PB90-1).